Reading from the N-terminus, the 176-residue chain is T cell receptor beta constant 1 (176 aa).

The 110-residue stretch at proline 8 to threonine 117 folds into the Ig-like C1-type domain. An intrachain disulfide couples cysteine 30 to cysteine 95. Residue asparagine 69 is glycosylated (N-linked (GlcNAc...) asparagine). The tract at residues cysteine 130 to alanine 144 is connecting peptide. Residues isoleucine 150–methionine 170 form a helical membrane-spanning segment. Over valine 171–phenylalanine 176 the chain is Cytoplasmic.

Alpha-beta TR is a heterodimer composed of an alpha and beta chain; disulfide-linked. The alpha-beta TR is associated with the transmembrane signaling CD3 coreceptor proteins to form the TR-CD3 (TcR or TCR). The assembly of alpha-beta TR heterodimers with CD3 occurs in the endoplasmic reticulum where a single alpha-beta TR heterodimer associates with one CD3D-CD3E heterodimer, one CD3G-CD3E heterodimer and one CD247 homodimer forming a stable octameric structure. CD3D-CD3E and CD3G-CD3E heterodimers preferentially associate with TR alpha and TR beta chains, respectively. The association of the CD247 homodimer is the last step of TcR assembly in the endoplasmic reticulum and is required for transport to the cell surface.

The protein resides in the cell membrane. Constant region of T cell receptor (TR) beta chain. Alpha-beta T cell receptors are antigen specific receptors which are essential to the immune response and are present on the cell surface of T lymphocytes. Recognize peptide-major histocompatibility (MH) (pMH) complexes that are displayed by antigen presenting cells (APC), a prerequisite for efficient T cell adaptive immunity against pathogens. Binding of alpha-beta TR to pMH complex initiates TR-CD3 clustering on the cell surface and intracellular activation of LCK that phosphorylates the ITAM motifs of CD3G, CD3D, CD3E and CD247 enabling the recruitment of ZAP70. In turn, ZAP70 phosphorylates LAT, which recruits numerous signaling molecules to form the LAT signalosome. The LAT signalosome propagates signal branching to three major signaling pathways, the calcium, the mitogen-activated protein kinase (MAPK) kinase and the nuclear factor NF-kappa-B (NF-kB) pathways, leading to the mobilization of transcription factors that are critical for gene expression and essential for T cell growth and differentiation. The T cell repertoire is generated in the thymus, by V-(D)-J rearrangement. This repertoire is then shaped by intrathymic selection events to generate a peripheral T cell pool of self-MH restricted, non-autoaggressive T cells. Post-thymic interaction of alpha-beta TR with the pMH complexes shapes TR structural and functional avidity. This Homo sapiens (Human) protein is T cell receptor beta constant 1.